A 390-amino-acid chain; its full sequence is tRNA(Met) cytidine acetate ligase (390 aa).

ATP is bound by residues 7-20, glycine 101, asparagine 162, and arginine 187; that span reads VVEY…HKLH.

The protein belongs to the TmcAL family.

It localises to the cytoplasm. The enzyme catalyses cytidine(34) in elongator tRNA(Met) + acetate + ATP = N(4)-acetylcytidine(34) in elongator tRNA(Met) + AMP + diphosphate. Catalyzes the formation of N(4)-acetylcytidine (ac(4)C) at the wobble position of elongator tRNA(Met), using acetate and ATP as substrates. First activates an acetate ion to form acetyladenylate (Ac-AMP) and then transfers the acetyl group to tRNA to form ac(4)C34. This is tRNA(Met) cytidine acetate ligase from Listeria monocytogenes serotype 4b (strain F2365).